A 382-amino-acid chain; its full sequence is ATP phosphoribosyltransferase regulatory subunit (382 aa).

This sequence belongs to the class-II aminoacyl-tRNA synthetase family. HisZ subfamily. As to quaternary structure, heteromultimer composed of HisG and HisZ subunits.

The protein resides in the cytoplasm. It participates in amino-acid biosynthesis; L-histidine biosynthesis; L-histidine from 5-phospho-alpha-D-ribose 1-diphosphate: step 1/9. Functionally, required for the first step of histidine biosynthesis. May allow the feedback regulation of ATP phosphoribosyltransferase activity by histidine. The polypeptide is ATP phosphoribosyltransferase regulatory subunit (Albidiferax ferrireducens (strain ATCC BAA-621 / DSM 15236 / T118) (Rhodoferax ferrireducens)).